Reading from the N-terminus, the 159-residue chain is Transcription elongation factor A protein-like 1 (159 aa).

A disordered region spans residues 1-97 (MDKPRKENEE…PPCGVGKHKL (97 aa)). Basic and acidic residues predominate over residues 17–34 (KTDEERPPVEHSPEKQSP). Phosphoserine is present on residues serine 28, serine 33, serine 38, serine 39, serine 43, and serine 44. The span at 37-54 (QSSEEQSSEEEFFPEELL) shows a compositional bias: acidic residues. Over residues 64 to 80 (SEERPPQEGLSRKDLFE) the composition is skewed to basic and acidic residues.

This sequence belongs to the TFS-II family. TFA subfamily. In terms of processing, phosphorylation of Ser-38 and Ser-39 is critical for transcriptional repression. In terms of tissue distribution, expressed in all tissues examined. Highly expressed in heart, ovary, prostate and skeletal muscle. Moderately expressed in brain, placenta, testis and small intestine. Weakly expressed in lung, liver and spleen. Expressed in several cancer cell lines.

It is found in the nucleus. In terms of biological role, may be involved in transcriptional regulation. Modulates various viral and cellular promoters in a promoter context-dependent manner. For example, transcription from the FOS promoter is increased, while Rous sarcoma virus (RSV) long terminal repeat (LTR) promoter activity is repressed. Does not bind DNA directly. The chain is Transcription elongation factor A protein-like 1 from Homo sapiens (Human).